A 442-amino-acid chain; its full sequence is ATP-dependent protease ATPase subunit HslU (442 aa).

ATP contacts are provided by residues Ile-18, Gly-60 to Glu-65, Asp-255, Glu-320, and Arg-392.

The protein belongs to the ClpX chaperone family. HslU subfamily. As to quaternary structure, a double ring-shaped homohexamer of HslV is capped on each side by a ring-shaped HslU homohexamer. The assembly of the HslU/HslV complex is dependent on binding of ATP.

The protein localises to the cytoplasm. ATPase subunit of a proteasome-like degradation complex; this subunit has chaperone activity. The binding of ATP and its subsequent hydrolysis by HslU are essential for unfolding of protein substrates subsequently hydrolyzed by HslV. HslU recognizes the N-terminal part of its protein substrates and unfolds these before they are guided to HslV for hydrolysis. This is ATP-dependent protease ATPase subunit HslU from Aeromonas salmonicida (strain A449).